We begin with the raw amino-acid sequence, 586 residues long: Isocitrate dehydrogenase kinase/phosphatase (586 aa).

ATP-binding positions include 316-322 (ARGDRGL) and lysine 337. The active site involves aspartate 372.

It belongs to the AceK family.

The protein resides in the cytoplasm. It carries out the reaction L-seryl-[isocitrate dehydrogenase] + ATP = O-phospho-L-seryl-[isocitrate dehydrogenase] + ADP + H(+). In terms of biological role, bifunctional enzyme which can phosphorylate or dephosphorylate isocitrate dehydrogenase (IDH) on a specific serine residue. This is a regulatory mechanism which enables bacteria to bypass the Krebs cycle via the glyoxylate shunt in response to the source of carbon. When bacteria are grown on glucose, IDH is fully active and unphosphorylated, but when grown on acetate or ethanol, the activity of IDH declines drastically concomitant with its phosphorylation. This is Isocitrate dehydrogenase kinase/phosphatase from Anaeromyxobacter dehalogenans (strain 2CP-C).